A 1005-amino-acid polypeptide reads, in one-letter code: Sorbin and SH3 domain-containing protein 1 homolog (1005 aa).

Disordered regions lie at residues 1–31 (MMHHPHPFGSNLANSSEPQQPSGQYLNPAAD), 61–86 (LDMKTPTGNSSRYQKPAPPPVDSTPS), 99–153 (YVDP…PHSA), 243–292 (NELK…FNSE), 386–409 (FEEKQNRSPMTSTPSYKEQGFKND), 427–475 (TTKN…TAAA), and 542–622 (MHRK…SNEE). Residues 11–25 (NLANSSEPQQPSGQY) show a composition bias toward polar residues. Positions 260-269 (VMTSSTENLK) are enriched in polar residues. Residues 270-279 (NGNNQQNQQP) are compositionally biased toward low complexity. The segment covering 392 to 409 (RSPMTSTPSYKEQGFKND) has biased composition (polar residues). Residues 448-475 (SDTYPVSSSTTSTWPSHTTTPTTTTAAA) are compositionally biased toward low complexity. A SoHo domain is found at 499–567 (VMSTNMDEPI…FINPSNVTDG (69 aa)). A compositionally biased stretch (basic and acidic residues) spans 544-557 (RKGEDGSNEGKEQH). Over residues 559-589 (INPSNVTDGIGRTTPTASNLGRSRENLSFNQ) the composition is skewed to polar residues. Residues 610 to 642 (YNNQERVKQSNEEELLRLKAEKLAEELRKEKER) adopt a coiled-coil conformation. SH3 domains follow at residues 683–742 (QPVM…INTG), 745–805 (GDSQ…PIEQ), and 946–1005 (KGSE…VKRH).

In terms of assembly, may interact with deb-1. In terms of tissue distribution, expressed in body wall muscles, muscle arm attachment sites at the nerve ring, all non-striated muscles, and distal tip cells of the gonad. Highly expressed in the origins and insertions of the vulval and anal depressor muscles and the spicule-associated and diagonal muscles of the male tail. Expressed in small puncta throughout the uterus, stomatointestinal muscle and proximal gonadal sheath tissues. Not expressed in the pharynx.

The protein resides in the cell junction. The protein localises to the adherens junction. Its subcellular location is the cell membrane. It localises to the focal adhesion. In terms of biological role, required for organization of sarcomeres in body wall muscles and for maintaining normal mitochondrial position in myocytes. The sequence is that of Sorbin and SH3 domain-containing protein 1 homolog from Caenorhabditis elegans.